The primary structure comprises 1045 residues: Elongation factor 3 (1045 aa).

Positions 42, 44, and 83 each coordinate ADP. HEAT repeat units follow at residues 86–123 (PYVV…AVNP), 125–162 (AVKA…QAKS), 166–203 (LRMT…TVEN), 171–209 (LIPV…IERF), 205–241 (DIER…EVTP), 242–279 (ATLS…LVED), and 285–323 (PFLN…VGAV). Residues Thr-392 and His-396 each coordinate ADP. ABC transporter domains follow at residues 426–641 (EEGE…YYEL) and 667–993 (VKVS…KKED). Residues Asn-703, Glu-922, Asn-925, and His-951 each coordinate ADP. Residues 975-1045 (GHNWVSGQGS…AYVSDDDADF (71 aa)) are disordered. Over residues 1020-1031 (RKKKKERMKKKK) the composition is skewed to basic residues.

Belongs to the ABC transporter superfamily. ABCF family. EF3 subfamily.

It localises to the cytoplasm. Its subcellular location is the cytosol. It catalyses the reaction ATP + H2O = ADP + phosphate + H(+). It functions in the pathway protein biosynthesis; polypeptide chain elongation. Its function is as follows. Ribosome-dependent ATPase that functions in cytoplasmic translation elongation. Required for the ATP-dependent release of deacylated tRNA from the ribosomal E-site during protein biosynthesis. Stimulates the eEF1A-dependent binding of aminoacyl-tRNA to the ribosomal A-site, which has reduced affinity for tRNA as long as the E-site is occupied. Assists translation termination by stimulating the release of nascent protein from the ribosome by release factors. This Zygosaccharomyces rouxii (strain ATCC 2623 / CBS 732 / NBRC 1130 / NCYC 568 / NRRL Y-229) protein is Elongation factor 3.